Here is a 308-residue protein sequence, read N- to C-terminus: N-acetyl-gamma-glutamyl-phosphate reductase (308 aa).

Cys116 is a catalytic residue.

It belongs to the NAGSA dehydrogenase family. Type 2 subfamily.

It is found in the cytoplasm. The enzyme catalyses N-acetyl-L-glutamate 5-semialdehyde + phosphate + NADP(+) = N-acetyl-L-glutamyl 5-phosphate + NADPH + H(+). Its pathway is amino-acid biosynthesis; L-arginine biosynthesis; N(2)-acetyl-L-ornithine from L-glutamate: step 3/4. In terms of biological role, catalyzes the NADPH-dependent reduction of N-acetyl-5-glutamyl phosphate to yield N-acetyl-L-glutamate 5-semialdehyde. This chain is N-acetyl-gamma-glutamyl-phosphate reductase, found in Mesorhizobium japonicum (strain LMG 29417 / CECT 9101 / MAFF 303099) (Mesorhizobium loti (strain MAFF 303099)).